Reading from the N-terminus, the 115-residue chain is Ig heavy chain V-III region J606 (115 aa).

One can recognise an Ig-like domain in the interval 1–114; the sequence is EVKLEESGGG…WGQGTLVTVS (114 aa). Residues Cys-22 and Cys-98 are joined by a disulfide bond.

This Mus musculus (Mouse) protein is Ig heavy chain V-III region J606.